The sequence spans 353 residues: Nicotinate-nucleotide--dimethylbenzimidazole phosphoribosyltransferase (353 aa).

Glutamate 318 functions as the Proton acceptor in the catalytic mechanism.

It belongs to the CobT family.

It carries out the reaction 5,6-dimethylbenzimidazole + nicotinate beta-D-ribonucleotide = alpha-ribazole 5'-phosphate + nicotinate + H(+). Its pathway is nucleoside biosynthesis; alpha-ribazole biosynthesis; alpha-ribazole from 5,6-dimethylbenzimidazole: step 1/2. Functionally, catalyzes the synthesis of alpha-ribazole-5'-phosphate from nicotinate mononucleotide (NAMN) and 5,6-dimethylbenzimidazole (DMB). The chain is Nicotinate-nucleotide--dimethylbenzimidazole phosphoribosyltransferase from Chloroflexus aggregans (strain MD-66 / DSM 9485).